A 660-amino-acid chain; its full sequence is Bifunctional polymyxin resistance protein ArnA (660 aa).

Positions 1–304 are formyltransferase ArnAFT; sequence MKTVVFAYHD…MLGLVQGSRL (304 aa). 86–88 provides a ligand contact to (6R)-10-formyltetrahydrofolate; the sequence is HLI. The Proton donor; for formyltransferase activity role is filled by H104. (6R)-10-formyltetrahydrofolate contacts are provided by residues R114 and 136–140; that span reads VKRAD. Residues 314–660 are dehydrogenase ArnADH; the sequence is RRTRVLILGV…RTVDLTDKPS (347 aa). Residues D347 and 368 to 369 each bind NAD(+); that span reads DI. UDP-alpha-D-glucuronate-binding positions include A393, Y398, and 432–433; that span reads TS. The active-site Proton acceptor; for decarboxylase activity is the E434. UDP-alpha-D-glucuronate contacts are provided by residues R460, N492, 526–535, and Y613; that span reads KLIDGGKQKR. R619 acts as the Proton donor; for decarboxylase activity in catalysis.

The protein in the N-terminal section; belongs to the Fmt family. UDP-L-Ara4N formyltransferase subfamily. In the C-terminal section; belongs to the NAD(P)-dependent epimerase/dehydratase family. UDP-glucuronic acid decarboxylase subfamily. Homohexamer, formed by a dimer of trimers.

It carries out the reaction UDP-alpha-D-glucuronate + NAD(+) = UDP-beta-L-threo-pentopyranos-4-ulose + CO2 + NADH. The enzyme catalyses UDP-4-amino-4-deoxy-beta-L-arabinose + (6R)-10-formyltetrahydrofolate = UDP-4-deoxy-4-formamido-beta-L-arabinose + (6S)-5,6,7,8-tetrahydrofolate + H(+). The protein operates within nucleotide-sugar biosynthesis; UDP-4-deoxy-4-formamido-beta-L-arabinose biosynthesis; UDP-4-deoxy-4-formamido-beta-L-arabinose from UDP-alpha-D-glucuronate: step 1/3. Its pathway is nucleotide-sugar biosynthesis; UDP-4-deoxy-4-formamido-beta-L-arabinose biosynthesis; UDP-4-deoxy-4-formamido-beta-L-arabinose from UDP-alpha-D-glucuronate: step 3/3. It participates in bacterial outer membrane biogenesis; lipopolysaccharide biosynthesis. Bifunctional enzyme that catalyzes the oxidative decarboxylation of UDP-glucuronic acid (UDP-GlcUA) to UDP-4-keto-arabinose (UDP-Ara4O) and the addition of a formyl group to UDP-4-amino-4-deoxy-L-arabinose (UDP-L-Ara4N) to form UDP-L-4-formamido-arabinose (UDP-L-Ara4FN). The modified arabinose is attached to lipid A and is required for resistance to polymyxin and cationic antimicrobial peptides. The sequence is that of Bifunctional polymyxin resistance protein ArnA from Shigella sonnei (strain Ss046).